Reading from the N-terminus, the 355-residue chain is Ubiquinone biosynthesis protein COQ4 homolog, mitochondrial (355 aa).

Residues His-134, Asp-135, His-138, and Glu-150 each contribute to the Zn(2+) site.

This sequence belongs to the COQ4 family. As to quaternary structure, component of a multi-subunit COQ enzyme complex. Zn(2+) is required as a cofactor.

It is found in the mitochondrion inner membrane. The enzyme catalyses a 4-hydroxy-3-methoxy-5-(all-trans-polyprenyl)benzoate + H(+) = a 2-methoxy-6-(all-trans-polyprenyl)phenol + CO2. It participates in cofactor biosynthesis; ubiquinone biosynthesis. Lyase that catalyzes the C1-decarboxylation of 4-hydroxy-3-methoxy-5-(all-trans-polyprenyl)benzoic acid into 2-methoxy-6-(all-trans-polyprenyl)phenol during ubiquinone biosynthesis. In Plasmodium chabaudi chabaudi, this protein is Ubiquinone biosynthesis protein COQ4 homolog, mitochondrial.